Here is a 124-residue protein sequence, read N- to C-terminus: UPF0102 protein Rcas_2007 (124 aa).

The protein belongs to the UPF0102 family.

The sequence is that of UPF0102 protein Rcas_2007 from Roseiflexus castenholzii (strain DSM 13941 / HLO8).